The sequence spans 207 residues: Germin-like protein 1 (207 aa).

The first 17 residues, 1–17 (MLRIIFLLSLLFALSND), serve as a signal peptide directing secretion. Cysteine 23 and cysteine 38 form a disulfide bridge. Residues 51 to 197 (FSLGTPGNTT…TTFLPPATVK (147 aa)) enclose the Cupin type-1 domain. N-linked (GlcNAc...) asparagine glycosylation is present at asparagine 58. Histidine 99, histidine 101, glutamate 106, and histidine 145 together coordinate Mn(2+).

This sequence belongs to the germin family. In terms of assembly, oligomer (believed to be a pentamer but probably hexamer).

The protein resides in the secreted. It is found in the extracellular space. The protein localises to the apoplast. Functionally, may play a role in plant defense. Probably has no oxalate oxidase activity even if the active site is conserved. The protein is Germin-like protein 1 (GER1) of Brassica napus (Rape).